The primary structure comprises 179 residues: uncharacterized protein (179 aa).

The next 4 helical transmembrane spans lie at 33–53 (HIIALASKIAFTLALLYVILD), 63–83 (VMFIALFLGFVSYLSGDMLVL), 89–109 (ITASLADFGLSFVILWVFVLT), and 115–135 (FSPFGAALLSAACLTVFEYFF).

It localises to the cell membrane. This is an uncharacterized protein from Bacillus subtilis (strain 168).